A 476-amino-acid chain; its full sequence is Sedoheptulokinase (476 aa).

Belongs to the FGGY kinase family.

It localises to the cytoplasm. It catalyses the reaction sedoheptulose + ATP = D-sedoheptulose 7-phosphate + ADP + H(+). Functionally, acts as a modulator of macrophage activation through control of glucose metabolism. This Mus musculus (Mouse) protein is Sedoheptulokinase (Shpk).